The sequence spans 1536 residues: Alpha-2-macroglobulin (1536 aa).

The signal sequence occupies residues 1-23 (MGMKRLIFLVFLLISFSLFGGYA). The segment at residues 919–922 (CVEQ) is a cross-link (isoglutamyl cysteine thioester (Cys-Gln)).

It belongs to the protease inhibitor I39 (alpha-2-macroglobulin) family. Bacterial alpha-2-macroglobulin subfamily.

Its function is as follows. Protects the bacterial cell from peptidases. This chain is Alpha-2-macroglobulin, found in Thermotoga maritima (strain ATCC 43589 / DSM 3109 / JCM 10099 / NBRC 100826 / MSB8).